A 234-amino-acid chain; its full sequence is UPF0758 protein Rfer_3252 (234 aa).

One can recognise an MPN domain in the interval 112–234 (IFATPDAVKH…ALSMAERGLL (123 aa)). His183, His185, and Asp196 together coordinate Zn(2+). The JAMM motif signature appears at 183 to 196 (HNHPSGTVQPSRAD).

It belongs to the UPF0758 family.

This is UPF0758 protein Rfer_3252 from Albidiferax ferrireducens (strain ATCC BAA-621 / DSM 15236 / T118) (Rhodoferax ferrireducens).